The primary structure comprises 589 residues: Nicotinate phosphoribosyltransferase (589 aa).

The tract at residues 1 to 30 (MSQSNTPLKRKKTENGYSENGSTTGATSNQ) is disordered. Polar residues predominate over residues 15-30 (NGYSENGSTTGATSNQ). Nicotinate contacts are provided by Tyr-68 and Thr-256. His-259 carries the post-translational modification Phosphohistidine. Arg-356 contacts nicotinate. Position 418 (Thr-418) interacts with 5-phospho-alpha-D-ribose 1-diphosphate.

This sequence belongs to the NAPRTase family. Mg(2+) is required as a cofactor. Mn(2+) serves as cofactor. Transiently phosphorylated on a His residue during the reaction cycle. Phosphorylation strongly increases the affinity for substrates and increases the rate of nicotinate D-ribonucleotide production. Dephosphorylation regenerates the low-affinity form of the enzyme, leading to product release.

The catalysed reaction is nicotinate + 5-phospho-alpha-D-ribose 1-diphosphate + ATP + H2O = nicotinate beta-D-ribonucleotide + ADP + phosphate + diphosphate. The protein operates within cofactor biosynthesis; NAD(+) biosynthesis; nicotinate D-ribonucleotide from nicotinate: step 1/1. Its function is as follows. Catalyzes the first step in the biosynthesis of NAD from nicotinic acid, the ATP-dependent synthesis of beta-nicotinate D-ribonucleotide from nicotinate and 5-phospho-D-ribose 1-phosphate. Helps prevent cellular oxidative stress via its role in NAD biosynthesis. The sequence is that of Nicotinate phosphoribosyltransferase (naprt) from Dictyostelium discoideum (Social amoeba).